The chain runs to 181 residues: ATP synthase subunit b (181 aa).

The chain crosses the membrane as a helical span at residues 16-36 (LIPPIPELVIGLIAFVIVFGF).

Belongs to the ATPase B chain family. As to quaternary structure, F-type ATPases have 2 components, F(1) - the catalytic core - and F(0) - the membrane proton channel. F(1) has five subunits: alpha(3), beta(3), gamma(1), delta(1), epsilon(1). F(0) has three main subunits: a(1), b(2) and c(10-14). The alpha and beta chains form an alternating ring which encloses part of the gamma chain. F(1) is attached to F(0) by a central stalk formed by the gamma and epsilon chains, while a peripheral stalk is formed by the delta and b chains.

The protein localises to the cell membrane. Functionally, f(1)F(0) ATP synthase produces ATP from ADP in the presence of a proton or sodium gradient. F-type ATPases consist of two structural domains, F(1) containing the extramembraneous catalytic core and F(0) containing the membrane proton channel, linked together by a central stalk and a peripheral stalk. During catalysis, ATP synthesis in the catalytic domain of F(1) is coupled via a rotary mechanism of the central stalk subunits to proton translocation. Component of the F(0) channel, it forms part of the peripheral stalk, linking F(1) to F(0). The protein is ATP synthase subunit b of Streptomyces lividans.